The sequence spans 593 residues: Genetic interactor of prohibitins 3, mitochondrial (593 aa).

A mitochondrion-targeting transit peptide spans 1–61; sequence MLGRIRPFVR…NPSKPGFYRP (61 aa). The region spanning 142-349 is the CP-type G domain; that stretch reads VESIDKIMST…IVDVPGFSAN (208 aa).

It belongs to the TRAFAC class YlqF/YawG GTPase family. GEP3 subfamily.

The protein resides in the mitochondrion. May be involved in the mitochondrial lipid metabolism. This is Genetic interactor of prohibitins 3, mitochondrial (GEP3) from Debaryomyces hansenii (strain ATCC 36239 / CBS 767 / BCRC 21394 / JCM 1990 / NBRC 0083 / IGC 2968) (Yeast).